Consider the following 374-residue polypeptide: tRNA-specific 2-thiouridylase MnmA (374 aa).

Residues 17 to 24 and M43 each bind ATP; that span reads GMSGGVDS. Positions 103–105 are interaction with target base in tRNA; the sequence is NPD. The active-site Nucleophile is the C108. A disulfide bridge links C108 with C204. G132 contributes to the ATP binding site. An interaction with tRNA region spans residues 154–156; that stretch reads KDQ. C204 serves as the catalytic Cysteine persulfide intermediate. The tract at residues 316–317 is interaction with tRNA; it reads RY.

This sequence belongs to the MnmA/TRMU family.

It is found in the cytoplasm. The enzyme catalyses S-sulfanyl-L-cysteinyl-[protein] + uridine(34) in tRNA + AH2 + ATP = 2-thiouridine(34) in tRNA + L-cysteinyl-[protein] + A + AMP + diphosphate + H(+). Its function is as follows. Catalyzes the 2-thiolation of uridine at the wobble position (U34) of tRNA, leading to the formation of s(2)U34. In Pseudomonas entomophila (strain L48), this protein is tRNA-specific 2-thiouridylase MnmA.